A 1312-amino-acid polypeptide reads, in one-letter code: DNA repair protein RAD50 (1312 aa).

Residues Arg-13, Asn-36, Gly-37, Gly-39, Lys-40, Thr-41, Thr-42, Ile-65, Asp-67, and Gln-158 each coordinate ATP. A Mg(2+)-binding site is contributed by Thr-41. Gln-158 is a Mg(2+) binding site. 2 coiled-coil regions span residues 185 to 347 and 403 to 558; these read TKAL…LIRR and QDLT…LQND. Ser-469 carries the post-translational modification Phosphoserine. Phosphothreonine is present on Thr-568. The stretch at 640–678 forms a coiled coil; that stretch reads DCTIDEYNDVLEETELSYKTALENLKMHQTTLEFNRKAL. Positions 640-741 constitute a Zinc-hook domain; that stretch reads DCTIDEYNDV…SLRLLEKHII (102 aa). Zn(2+) is bound by residues Cys-687 and Cys-690. Coiled-coil stretches lie at residues 712-741 and 787-1108; these read DANF…KHII and LAES…DIEK.

This sequence belongs to the SMC family. RAD50 subfamily. In terms of assembly, component of the MRN complex composed of two heterodimers RAD50 and MRE11 associated with a single XRS2. The MRN complexes dimerize on DNA to form joined MRN-MRN oligomers required for DNA double-strand break repair. Requires Zn(2+) as cofactor.

It localises to the nucleus. The protein localises to the chromosome. The enzyme catalyses ATP + H2O = ADP + phosphate + H(+). In terms of biological role, component of the MRN complex, which plays a central role in double-strand break (DSB) repair, DNA recombination, maintenance of telomere integrity and meiosis. The MRN complex is involved in the repair of DNA double-strand breaks (DSBs) via homologous recombination (HR), an error-free mechanism which primarily occurs during S and G2 phases. The complex (1) mediates the end resection of damaged DNA, which generates proper single-stranded DNA, a key initial steps in HR, and is (2) required for the recruitment of other repair factors and efficient activation of TEL1/ATM and ATR upon DNA damage. The MRN complex possesses single-strand endonuclease activity and double-strand-specific 3'-5' exonuclease activity, which are provided by MRE11, to initiate end resection, which is required for single-strand invasion and recombination. Within the complex, RAD50 is both required to bind DNA ends and hold them in close proximity and regulate the activity of MRE11. RAD50 provides an ATP-dependent control of MRE11 by positioning DNA ends into the MRE11 active site: ATP-binding induces a large structural change from an open form with accessible MRE11 nuclease sites into a closed form. The MRN complex is also required for the processing of R-loops. The sequence is that of DNA repair protein RAD50 from Saccharomyces cerevisiae (strain ATCC 204508 / S288c) (Baker's yeast).